A 431-amino-acid polypeptide reads, in one-letter code: Urokinase-type plasminogen activator (431 aa).

The N-terminal stretch at 1–20 (MRALLARLLLCVLVVSDSKG) is a signal peptide. The EGF-like domain occupies 27–63 (VPSNCDCLNGGTCVSNKYFSNIHWCNCPKKFGGQHCE). 6 disulfides stabilise this stretch: C31-C39, C33-C51, C53-C62, C70-C151, C91-C133, and C122-C146. The tract at residues 34–57 (LNGGTCVSNKYFSNIHWCNCPKKF) is binds urokinase plasminogen activator surface receptor. T38 carries an O-linked (Fuc) threonine glycan. The 82-residue stretch at 70–151 (CYEGNGHFYR…LVQECMVHDC (82 aa)) folds into the Kringle domain. The interval 152-177 (ADGKKPSSPPEELKFQCGQKTLRPRF) is connecting peptide. S158 bears the Phosphoserine mark. Cystine bridges form between C168–C299, C209–C225, C217–C288, C313–C382, C345–C361, and C372–C400. Residues 179–424 (IIGGEFTTIE…FLPWIRSHTK (246 aa)) enclose the Peptidase S1 domain. Catalysis depends on charge relay system residues H224 and D275. N322 carries an N-linked (GlcNAc...) asparagine glycan. At S323 the chain carries Phosphoserine. S376 (charge relay system) is an active-site residue.

It belongs to the peptidase S1 family. As to quaternary structure, found in high and low molecular mass forms. Each consists of two chains, A and B. The high molecular mass form contains a long chain A which is cleaved to yield a short chain A. Forms heterodimer with SERPINA5. Binds LRP1B; binding is followed by internalization and degradation. Interacts with MRC2. Interacts with PLAUR. In complex with SERPINE1, interacts with PLAUR/uPAR. Interacts with SORL1 and LRP1, either alone or in complex with SERPINE1; these interactions are abolished in the presence of LRPAP1/RAP. The ternary complex composed of PLAUR-PLAU-PAI1 also interacts with SORLA. Phosphorylation of Ser-158 and Ser-323 abolishes proadhesive ability but does not interfere with receptor binding. In terms of processing, produced as an inactive single-chain protein (pro-uPA or sc-uPA), is processed into the active disulfide-linked two-chain form of PLAU/uPA by a proteolytic event mediated, at least, by TMPRSS4. Expressed in the prostate gland and prostate cancers.

The protein resides in the secreted. The enzyme catalyses Specific cleavage of Arg-|-Val bond in plasminogen to form plasmin.. With respect to regulation, inhibited by SERPINA5. Inhibited by SERPINE1. Its function is as follows. Specifically cleaves the zymogen plasminogen to form the active enzyme plasmin. In Homo sapiens (Human), this protein is Urokinase-type plasminogen activator.